We begin with the raw amino-acid sequence, 154 residues long: uncharacterized protein (154 aa).

The segment at 104 to 124 (NNNNNDNDNNNKEKEDNDEKE) is disordered. The segment covering 112-124 (NNNKEKEDNDEKE) has biased composition (basic and acidic residues).

This is an uncharacterized protein from Dictyostelium discoideum (Social amoeba).